The following is an 813-amino-acid chain: Molybdenum cofactor sulfurase (813 aa).

Lysine 228 carries the post-translational modification N6-(pyridoxal phosphate)lysine. Cysteine 391 is an active-site residue. Positions 625–670 (PSLRHAKAHMQKHQGPKRSAAIEKSSAHSFHDPPTPPDSDSENRKR) are disordered. A compositionally biased stretch (basic residues) spans 628–640 (RHAKAHMQKHQGP). The 165-residue stretch at 648–812 (KSSAHSFHDP…IKVGDKVSIG (165 aa)) folds into the MOSC domain.

Belongs to the class-V pyridoxal-phosphate-dependent aminotransferase family. MOCOS subfamily. It depends on pyridoxal 5'-phosphate as a cofactor.

It carries out the reaction Mo-molybdopterin + L-cysteine + AH2 = thio-Mo-molybdopterin + L-alanine + A + H2O. Its function is as follows. Sulfurates the molybdenum cofactor. Sulfation of molybdenum is essential for xanthine dehydrogenase (XDH) and aldehyde oxidase (ADO) enzymes in which molybdenum cofactor is liganded by 1 oxygen and 1 sulfur atom in active form. In Botryotinia fuckeliana (strain B05.10) (Noble rot fungus), this protein is Molybdenum cofactor sulfurase.